Reading from the N-terminus, the 200-residue chain is Phospholipase A2 inhibitor gamma subunit B (200 aa).

The signal sequence occupies residues 1-19 (MKSFLFCCLLGTFLAIGMC). Intrachain disulfides connect C22-C46, C25-C32, C39-C67, C73-C94, C95-C100, C120-C145, C138-C165, and C171-C191. N33 carries an N-linked (GlcNAc...) asparagine glycan.

The protein belongs to the CNF-like-inhibitor family. In terms of assembly, heterodimer of subunit A and subunit B. Expressed by the liver.

The protein localises to the secreted. Inhibits the enzymatic activity of phospholipase A2 (PA2). In Gloydius brevicaudus siniticus (Chinese mamushi), this protein is Phospholipase A2 inhibitor gamma subunit B.